The following is a 227-amino-acid chain: uncharacterized protein (227 aa).

Residues Asn-52–Asn-100 adopt a coiled-coil conformation.

The protein belongs to the mimivirus L246/L426 family.

This is an uncharacterized protein from Acanthamoeba polyphaga mimivirus (APMV).